Consider the following 419-residue polypeptide: 26S proteasome regulatory subunit 8 homolog A (419 aa).

Ala-2 carries the post-translational modification N-acetylalanine. 202–209 (GPPGTGKT) serves as a coordination point for ATP. Lys-406 participates in a covalent cross-link: Glycyl lysine isopeptide (Lys-Gly) (interchain with G-Cter in ubiquitin).

It belongs to the AAA ATPase family. In terms of assembly, component of the 19S regulatory particle (RP/PA700) base subcomplex of the 26S proteasome. The 26S proteasome is composed of a core protease (CP), known as the 20S proteasome, capped at one or both ends by the 19S regulatory particle (RP/PA700). The RP/PA700 complex is composed of at least 17 different subunits in two subcomplexes, the base and the lid, which form the portions proximal and distal to the 20S proteolytic core, respectively.

Its subcellular location is the cytoplasm. It localises to the nucleus. The 26S proteasome is involved in the ATP-dependent degradation of ubiquitinated proteins. The regulatory (or ATPase) complex confers ATP dependency and substrate specificity to the 26S complex. This is 26S proteasome regulatory subunit 8 homolog A (RPT6A) from Arabidopsis thaliana (Mouse-ear cress).